The following is a 465-amino-acid chain: Phosphatidylserine synthase 1 (465 aa).

Residues 1–35 are Cytoplasmic-facing; the sequence is MVSAMRSRTLSKDDVNYKMHFRMINEQQVEDITID. A helical membrane pass occupies residues 36–56; it reads FFYKPHTITLLTFTTVSLMYF. The Lumenal portion of the chain corresponds to 57-68; that stretch reads AFTRENTSQEDN. Residues 69-89 traverse the membrane as a helical segment; that stretch reads IWKGILSVIFFFLIISVLAFP. Residues 90–102 are Cytoplasmic-facing; sequence NGPFTRPHPAIWR. The chain crosses the membrane as a helical span at residues 103–123; it reads MVFGLSVLYFLFLVFLLFLNV. The Lumenal segment spans residues 124–186; that stretch reads EQVKAVMYWL…AMKALLIRSY (63 aa). The chain crosses the membrane as a helical span at residues 187–207; it reads GLCWTISITWEMTELFFMHLL. The Cytoplasmic portion of the chain corresponds to 208-216; that stretch reads PNFAECWWD. The helical transmembrane segment at 217–237 threads the bilayer; sequence QVILDILLCNGGGILLGMVVC. At 238 to 286 the chain is on the lumenal side; the sequence is RFLEMRTYHWASFKDIHTTTGKIKRAVLQFTPASWIYVRWFDPKSSFQR. A helical transmembrane segment spans residues 287 to 307; the sequence is VAGVYLFMIIWQLTELNTFFL. The Cytoplasmic segment spans residues 308 to 319; the sequence is KHIFVFQASHPL. A helical transmembrane segment spans residues 320–342; the sequence is SWCRILFIGIITAPTVRQYYAYL. The Lumenal segment spans residues 343 to 355; the sequence is TDTQCKRVGTQCW. The helical transmembrane segment at 356–376 threads the bilayer; sequence VFGAIAFLEATVCIKFGQDLF. Residues 377-383 are Cytoplasmic-facing; sequence SKTHLLY. The chain crosses the membrane as a helical span at residues 384–404; it reads VFLWLFSVAVITFLCLYGMVW. The Lumenal segment spans residues 405–465; the sequence is YADYCGQREK…GKVTNGVGKK (61 aa). Residues 440 to 465 are disordered; the sequence is PVKQNEGTSRRKNRHKGKVTNGVGKK. Residues 449-465 show a composition bias toward basic residues; that stretch reads RRKNRHKGKVTNGVGKK.

Belongs to the phosphatidyl serine synthase family.

The protein resides in the endoplasmic reticulum membrane. It carries out the reaction a 1,2-diacyl-sn-glycero-3-phosphoethanolamine + L-serine = a 1,2-diacyl-sn-glycero-3-phospho-L-serine + ethanolamine. The catalysed reaction is a 1,2-diacyl-sn-glycero-3-phosphocholine + L-serine = a 1,2-diacyl-sn-glycero-3-phospho-L-serine + choline. It participates in phospholipid metabolism; phosphatidylserine biosynthesis. Functionally, catalyzes a base-exchange reaction in which the polar head group of phosphatidylethanolamine (PE) or phosphatidylcholine (PC) is replaced by L-serine. Catalyzes mainly the conversion of phosphatidylcholine but also converts, in vitro and to a lesser extent, phosphatidylethanolamine. The protein is Phosphatidylserine synthase 1 (ptdss1) of Xenopus tropicalis (Western clawed frog).